Here is a 563-residue protein sequence, read N- to C-terminus: Lipase 1 (563 aa).

An N-terminal signal peptide occupies residues 1 to 19; that stretch reads MVSKTFFLAAALNVVGTLA. A Pyrrolidone carboxylic acid modification is found at Q20. C80 and C124 are disulfide-bonded. S236 (acyl-ester intermediate) is an active-site residue. A disulfide bridge connects residues C295 and C307. N302 carries N-linked (GlcNAc...) asparagine glycosylation. The active-site Charge relay system is E373. N383 is a glycosylation site (N-linked (GlcNAc...) asparagine). H482 (charge relay system) is an active-site residue.

The protein belongs to the type-B carboxylesterase/lipase family. In terms of assembly, monomer.

Its subcellular location is the secreted. It carries out the reaction a triacylglycerol + H2O = a diacylglycerol + a fatty acid + H(+). Its function is as follows. Hydrolyzes all ester bonds in triglyceride and displays a high affinity for triolein. For unsaturated substrates having long fatty acyl chains (C18:2 cis-9, cis-12 and C18:3 cis-9, cis-12, cis-15) GCL I shows higher specific activity than GCL II, whereas GCL II shows higher specific activity against saturated substrates having short fatty acid chains (C8, C10, C12 and C14). The polypeptide is Lipase 1 (LIP1) (Geotrichum candidum (Oospora lactis)).